A 398-amino-acid chain; its full sequence is MSKAKFERNKPHVNVGTIGHVDHGKTTLTAALTRVCHEVWGTGESRAFDQIDNAPEERARGITIATSHVEYDSPTRHYAHVDCPGHADYVKNMITGAAQMDGAILVCSAADGPMPQTREHILLSRQVGVPFIVVFLNKADMVDDEELLELVEMEVRDLLSQYDFPGDDTPIITGSALMALEGKDDNEMGTTAVKKLVEALDDYIPEPERAIDQPFLMPIEDVFSISGRGTVVTGRVERGIIKVGDEVEIVGIRDTTKTTCTGVEMFRKLLDEGRAGENVGVLLRGTKRDDVERGQVLCVPGSIKPHTKFECEVYVLSKEEGGRHTPFFKGYRPQFYFRTTDVTGSCELPEGVEMVMPGDNVKMTVTLIAPIAMEDGLRFAIREGGRTVGAGVVAKIIE.

In terms of domain architecture, tr-type G spans 10-208 (KPHVNVGTIG…ALDDYIPEPE (199 aa)). Positions 19–26 (GHVDHGKT) are G1. 19–26 (GHVDHGKT) contributes to the GTP binding site. Thr26 provides a ligand contact to Mg(2+). A G2 region spans residues 61–65 (GITIA). Residues 82–85 (DCPG) form a G3 region. GTP is bound by residues 82-86 (DCPGH) and 137-140 (NKAD). Residues 137-140 (NKAD) are G4. The segment at 175–177 (SAL) is G5.

The protein belongs to the TRAFAC class translation factor GTPase superfamily. Classic translation factor GTPase family. EF-Tu/EF-1A subfamily. As to quaternary structure, monomer.

It localises to the cytoplasm. It catalyses the reaction GTP + H2O = GDP + phosphate + H(+). Functionally, GTP hydrolase that promotes the GTP-dependent binding of aminoacyl-tRNA to the A-site of ribosomes during protein biosynthesis. The chain is Elongation factor Tu from Marinobacter nauticus (strain ATCC 700491 / DSM 11845 / VT8) (Marinobacter aquaeolei).